The primary structure comprises 319 residues: Malate dehydrogenase (319 aa).

NAD(+) is bound by residues 11–16 (GAGNVG) and Asp36. Residues Arg85 and Arg91 each coordinate substrate. NAD(+) contacts are provided by residues Asn98 and 121–123 (VSN). Substrate contacts are provided by Asn123 and Arg154. His178 (proton acceptor) is an active-site residue.

This sequence belongs to the LDH/MDH superfamily. MDH type 3 family.

It carries out the reaction (S)-malate + NAD(+) = oxaloacetate + NADH + H(+). Catalyzes the reversible oxidation of malate to oxaloacetate. In Sulfurimonas denitrificans (strain ATCC 33889 / DSM 1251) (Thiomicrospira denitrificans (strain ATCC 33889 / DSM 1251)), this protein is Malate dehydrogenase.